The chain runs to 216 residues: 3-keto-L-gulonate-6-phosphate decarboxylase UlaD (216 aa).

A substrate-binding site is contributed by D11. Mg(2+) contacts are provided by E33 and D62. R192 is a binding site for substrate.

This sequence belongs to the HPS/KGPDC family. KGPDC subfamily. In terms of assembly, homodimer. It depends on Mg(2+) as a cofactor.

The enzyme catalyses 3-dehydro-L-gulonate 6-phosphate + H(+) = L-xylulose 5-phosphate + CO2. The protein operates within cofactor degradation; L-ascorbate degradation; D-xylulose 5-phosphate from L-ascorbate: step 2/4. In terms of biological role, catalyzes the decarboxylation of 3-keto-L-gulonate-6-P into L-xylulose-5-P. Is involved in the anaerobic L-ascorbate utilization. This Salmonella choleraesuis (strain SC-B67) protein is 3-keto-L-gulonate-6-phosphate decarboxylase UlaD.